The following is a 130-amino-acid chain: Small ribosomal subunit protein uS9 (130 aa).

Belongs to the universal ribosomal protein uS9 family.

In Yersinia pseudotuberculosis serotype O:1b (strain IP 31758), this protein is Small ribosomal subunit protein uS9.